The primary structure comprises 246 residues: Acetoacetyl-CoA reductase (246 aa).

NADP(+)-binding positions include 12-14 and 88-92; these read GGI and CAGIT. Residues Asp-94 and 147-150 each bind substrate; that span reads QFGQ. Tyr-153 serves as the catalytic Proton acceptor. NADP(+) is bound at residue 183–186; it reads PGYV. Residue 184 to 185 coordinates substrate; the sequence is GY.

Belongs to the short-chain dehydrogenases/reductases (SDR) family.

The protein resides in the cytoplasm. It carries out the reaction a (3R)-3-hydroxyacyl-CoA + NADP(+) = a 3-oxoacyl-CoA + NADPH + H(+). Its pathway is biopolymer metabolism; poly-(R)-3-hydroxybutanoate biosynthesis. The protein is Acetoacetyl-CoA reductase of Allochromatium vinosum (strain ATCC 17899 / DSM 180 / NBRC 103801 / NCIMB 10441 / D) (Chromatium vinosum).